Consider the following 393-residue polypeptide: S-adenosylmethionine synthase 4 (393 aa).

Residue E9 participates in Mg(2+) binding. H15 is an ATP binding site. E43 is a binding site for K(+). Residues E56 and Q99 each contribute to the L-methionine site. ATP is bound by residues 167–169, 235–238, D246, 252–253, A269, K273, and K277; these read DGK, SGRF, and RK. An L-methionine-binding site is contributed by D246. K277 contributes to the L-methionine binding site.

This sequence belongs to the AdoMet synthase family. As to quaternary structure, homotetramer. Mn(2+) serves as cofactor. Requires Mg(2+) as cofactor. Co(2+) is required as a cofactor. The cofactor is K(+). Detected in trichomes (at the protein level).

The protein resides in the cytoplasm. The catalysed reaction is L-methionine + ATP + H2O = S-adenosyl-L-methionine + phosphate + diphosphate. Its pathway is amino-acid biosynthesis; S-adenosyl-L-methionine biosynthesis; S-adenosyl-L-methionine from L-methionine: step 1/1. Its function is as follows. Catalyzes the formation of S-adenosylmethionine from methionine and ATP. The reaction comprises two steps that are both catalyzed by the same enzyme: formation of S-adenosylmethionine (AdoMet) and triphosphate, and subsequent hydrolysis of the triphosphate. The protein is S-adenosylmethionine synthase 4 (METK4) of Arabidopsis thaliana (Mouse-ear cress).